A 569-amino-acid polypeptide reads, in one-letter code: 4-hydroxy-7-methoxy-3-oxo-3,4-dihydro-2H-1,4-benzoxazin-2-yl glucoside beta-D-glucosidase 1a, chloroplastic (569 aa).

The N-terminal 50 residues, 1 to 50 (MALLAAATLNPTTHLSLRSRAGRNSENLWLRSAASSQKSKGRFCNLTIRA), are a transit peptide targeting the chloroplast. A beta-D-glucoside contacts are provided by residues Gln-92, His-194, and 239 to 240 (NE). The active-site Proton donor is the Glu-240. The cysteines at positions 259 and 265 are disulfide-linked. A beta-D-glucoside contacts are provided by residues Tyr-383, Glu-456, Trp-504, 511–512 (EW), and Phe-520. The active-site Nucleophile is Glu-456.

This sequence belongs to the glycosyl hydrolase 1 family. As to quaternary structure, homo- and heterohexamers. In terms of tissue distribution, expressed in young seedlings early after germination.

The protein resides in the plastid. It localises to the chloroplast. It carries out the reaction Hydrolysis of terminal, non-reducing beta-D-glucosyl residues with release of beta-D-glucose.. The catalysed reaction is DIMBOA beta-D-glucoside + H2O = DIMBOA + D-glucose. It catalyses the reaction DIBOA beta-D-glucoside + H2O = DIBOA + D-glucose. In terms of biological role, acts in defense of young plant parts against pests via the production of hydroxamic acids from hydroxamic acid glucosides. Enzymatic activity is highly correlated with plant growth. The preferred substrate is DIMBOA-beta-D-glucoside. This Triticum aestivum (Wheat) protein is 4-hydroxy-7-methoxy-3-oxo-3,4-dihydro-2H-1,4-benzoxazin-2-yl glucoside beta-D-glucosidase 1a, chloroplastic (GLU1A).